Here is a 429-residue protein sequence, read N- to C-terminus: 46 kDa membrane protein (429 aa).

A run of 9 helical transmembrane segments spans residues 26-46 (AALT…EDVF), 51-71 (TGID…VSVL), 99-119 (LVLV…VLLI), 173-193 (FLIH…ALLP), 224-244 (LLIK…AHPV), 279-299 (TLLF…TDVV), 315-335 (LLTV…IDNI), 360-380 (ILWW…AVGA), and 407-427 (IAVT…RYLV).

The protein belongs to the CitM (TC 2.A.11) transporter family.

The protein localises to the cell membrane. The sequence is that of 46 kDa membrane protein (ag45) from Mycobacterium leprae (strain TN).